A 100-amino-acid polypeptide reads, in one-letter code: Aspartyl/glutamyl-tRNA(Asn/Gln) amidotransferase subunit C (100 aa).

This sequence belongs to the GatC family. Heterotrimer of A, B and C subunits.

It catalyses the reaction L-glutamyl-tRNA(Gln) + L-glutamine + ATP + H2O = L-glutaminyl-tRNA(Gln) + L-glutamate + ADP + phosphate + H(+). The catalysed reaction is L-aspartyl-tRNA(Asn) + L-glutamine + ATP + H2O = L-asparaginyl-tRNA(Asn) + L-glutamate + ADP + phosphate + 2 H(+). In terms of biological role, allows the formation of correctly charged Asn-tRNA(Asn) or Gln-tRNA(Gln) through the transamidation of misacylated Asp-tRNA(Asn) or Glu-tRNA(Gln) in organisms which lack either or both of asparaginyl-tRNA or glutaminyl-tRNA synthetases. The reaction takes place in the presence of glutamine and ATP through an activated phospho-Asp-tRNA(Asn) or phospho-Glu-tRNA(Gln). The chain is Aspartyl/glutamyl-tRNA(Asn/Gln) amidotransferase subunit C from Dictyoglomus turgidum (strain DSM 6724 / Z-1310).